Consider the following 162-residue polypeptide: Transcriptional repressor NrdR (162 aa).

The segment at 1–21 (MNCPDCGDEQTRVIDTETSAD) is disordered. The segment at 3 to 34 (CPDCGDEQTRVIDTETSADGTSVRRRRECQRC) is a zinc-finger region. Residues 49–139 (LQVKKRNGTI…VYKAFSEPQE (91 aa)) form the ATP-cone domain.

Belongs to the NrdR family. Zn(2+) serves as cofactor.

In terms of biological role, negatively regulates transcription of bacterial ribonucleotide reductase nrd genes and operons by binding to NrdR-boxes. This is Transcriptional repressor NrdR from Halorubrum lacusprofundi (strain ATCC 49239 / DSM 5036 / JCM 8891 / ACAM 34).